The sequence spans 347 residues: NADH-ubiquinone oxidoreductase chain 2 (347 aa).

The next 10 membrane-spanning stretches (helical) occupy residues M1 to A21, H25 to M45, Y59 to V79, F111 to L131, I149 to G169, I178 to P198, T201 to L221, M237 to L257, N274 to M294, and L326 to L346.

The protein belongs to the complex I subunit 2 family. Core subunit of respiratory chain NADH dehydrogenase (Complex I) which is composed of 45 different subunits. Interacts with TMEM242.

The protein localises to the mitochondrion inner membrane. It catalyses the reaction a ubiquinone + NADH + 5 H(+)(in) = a ubiquinol + NAD(+) + 4 H(+)(out). Functionally, core subunit of the mitochondrial membrane respiratory chain NADH dehydrogenase (Complex I) which catalyzes electron transfer from NADH through the respiratory chain, using ubiquinone as an electron acceptor. Essential for the catalytic activity and assembly of complex I. This chain is NADH-ubiquinone oxidoreductase chain 2, found in Pteropus rodricensis (Rodriguez flying fox).